The chain runs to 607 residues: Oligoendopeptidase F homolog (607 aa).

His384 provides a ligand contact to Zn(2+). The active site involves Glu385. The Zn(2+) site is built by His388 and His391.

This sequence belongs to the peptidase M3B family. It depends on Zn(2+) as a cofactor.

In Mycoplasma genitalium (strain ATCC 33530 / DSM 19775 / NCTC 10195 / G37) (Mycoplasmoides genitalium), this protein is Oligoendopeptidase F homolog (pepF).